The following is a 599-amino-acid chain: Putative sensor histidine kinase NtrY-like (599 aa).

4 helical membrane-spanning segments follow: residues 17-37, 44-64, 85-105, and 285-305; these read ILIL…FYVI, FSTI…LGIL, IVIA…VFSV, and IMFI…GVLF. Positions 307 to 361 constitute an HAMP domain; that stretch reads AQIVKPIKKLVTATDKVKDGDLTVQVPENEVDKDEIGTLYVAFNRMIKQLSRQQR. The Histidine kinase domain maps to 378–589; that stretch reads KVAHEIKNPL…IIDIKFDLKE (212 aa). Histidine 381 is subject to Phosphohistidine; by autocatalysis.

The protein localises to the cell membrane. The catalysed reaction is ATP + protein L-histidine = ADP + protein N-phospho-L-histidine.. Functionally, member of the two-component regulatory system RT0603/RT0550. The protein is Putative sensor histidine kinase NtrY-like of Rickettsia typhi (strain ATCC VR-144 / Wilmington).